Reading from the N-terminus, the 135-residue chain is uncharacterized protein (135 aa).

A HotDog ACOT-type domain is found at 8–123 (PQGTIVLKTL…IFIYVAIDET (116 aa)).

It belongs to the acyl coenzyme A hydrolase family.

This is an uncharacterized protein from Buchnera aphidicola subsp. Schizaphis graminum (strain Sg).